We begin with the raw amino-acid sequence, 346 residues long: Methionine import ATP-binding protein MetN (346 aa).

The 242-residue stretch at 2–243 (VRFEGISKTY…PKHPITQSFL (242 aa)) folds into the ABC transporter domain. 40-47 (GRSGAGKS) is a binding site for ATP.

This sequence belongs to the ABC transporter superfamily. Methionine importer (TC 3.A.1.24) family. As to quaternary structure, the complex is composed of two ATP-binding proteins (MetN), two transmembrane proteins (MetI) and a solute-binding protein (MetQ).

It is found in the cell inner membrane. The enzyme catalyses L-methionine(out) + ATP + H2O = L-methionine(in) + ADP + phosphate + H(+). It carries out the reaction D-methionine(out) + ATP + H2O = D-methionine(in) + ADP + phosphate + H(+). Part of the ABC transporter complex MetNIQ involved in methionine import. Responsible for energy coupling to the transport system. In Bradyrhizobium diazoefficiens (strain JCM 10833 / BCRC 13528 / IAM 13628 / NBRC 14792 / USDA 110), this protein is Methionine import ATP-binding protein MetN.